The sequence spans 497 residues: 4,4'-diaponeurosporene oxygenase (497 aa).

7–19 (VIGGGLGGISAAI) serves as a coordination point for FAD.

Belongs to the carotenoid/retinoid oxidoreductase family. CrtP subfamily. The cofactor is FAD.

The enzyme catalyses all-trans-4,4'-diaponeurosporene + 2 AH2 + 2 O2 = 4,4'-diaponeurosporenal + 2 A + 3 H2O. It functions in the pathway carotenoid biosynthesis; staphyloxanthin biosynthesis; staphyloxanthin from farnesyl diphosphate: step 3/5. Functionally, involved in the biosynthesis of the yellow-orange carotenoid staphyloxanthin, which plays a role in the virulence via its protective function against oxidative stress. Catalyzes the oxidation of the terminal methyl side group of 4,4'-diaponeurosporene to form 4,4'-diaponeurosporen-4-al. The C40 carotenoid lycopene is a poor substrate. The chain is 4,4'-diaponeurosporene oxygenase from Staphylococcus aureus (strain Mu50 / ATCC 700699).